The following is a 553-amino-acid chain: Transmembrane protein DDB_G0292058 (553 aa).

A signal peptide spans 1-26 (MIKINKILSLLIILLIINCNYQFVKA). The next 2 membrane-spanning stretches (helical) occupy residues 80-100 (ILLS…GIIF) and 137-157 (VFIL…VFIT). N-linked (GlcNAc...) asparagine glycosylation is found at Asn162, Asn171, Asn178, and Asn195. 2 helical membrane-spanning segments follow: residues 243-263 (IIIV…VSAL) and 274-294 (SIAL…HYPI). 6 N-linked (GlcNAc...) asparagine glycosylation sites follow: Asn315, Asn332, Asn351, Asn396, Asn405, and Asn462. A helical membrane pass occupies residues 515 to 535 (LLIAPTAVFAILLTGLGITGI).

Its subcellular location is the membrane. The chain is Transmembrane protein DDB_G0292058 from Dictyostelium discoideum (Social amoeba).